Here is a 329-residue protein sequence, read N- to C-terminus: MNKKTIAMLGAGSWGTAVAIHLAKIGHKTLLWSHNPQHVALMAEQHSNPAYLPGIPFPENLIPSDNLIECVQSADYVIIAVPSHAFAEIINKIPKPTQGLAWLTKGVDPASHELLSQLVASRFGVDFPIAVISGPSFAKEVARFLPTALTLASNNTNYQKKMHQLFHHDNIRVYLSDDLIGVQLCGAVKNILAIACGISDGLGYGANAKAALITRGLAEMTRLGLSMGARQDTFLGLAGVGDLVLTCTDDQSRNRRFGLLLGREVPIPEAEHQIGQVVEGKHNAAQICAIANKNKVEMPICEQINALLHGIVHAQEAVNNLMSRPAKEE.

Residues serine 13, tryptophan 14, histidine 34, and lysine 105 each coordinate NADPH. Lysine 105, glycine 134, and serine 136 together coordinate sn-glycerol 3-phosphate. An NADPH-binding site is contributed by alanine 138. Positions 189, 242, 252, 253, and 254 each coordinate sn-glycerol 3-phosphate. The active-site Proton acceptor is lysine 189. Residue arginine 253 coordinates NADPH. The NADPH site is built by valine 277 and glutamate 279.

It belongs to the NAD-dependent glycerol-3-phosphate dehydrogenase family.

It localises to the cytoplasm. It carries out the reaction sn-glycerol 3-phosphate + NAD(+) = dihydroxyacetone phosphate + NADH + H(+). It catalyses the reaction sn-glycerol 3-phosphate + NADP(+) = dihydroxyacetone phosphate + NADPH + H(+). It participates in membrane lipid metabolism; glycerophospholipid metabolism. Its function is as follows. Catalyzes the reduction of the glycolytic intermediate dihydroxyacetone phosphate (DHAP) to sn-glycerol 3-phosphate (G3P), the key precursor for phospholipid synthesis. This chain is Glycerol-3-phosphate dehydrogenase [NAD(P)+], found in Legionella pneumophila subsp. pneumophila (strain Philadelphia 1 / ATCC 33152 / DSM 7513).